Reading from the N-terminus, the 153-residue chain is D-aminoacyl-tRNA deacylase (153 aa).

The short motif at 142–143 (GP) is the Gly-cisPro motif, important for rejection of L-amino acids element.

The protein belongs to the DTD family. In terms of assembly, homodimer.

The protein localises to the cytoplasm. The catalysed reaction is glycyl-tRNA(Ala) + H2O = tRNA(Ala) + glycine + H(+). The enzyme catalyses a D-aminoacyl-tRNA + H2O = a tRNA + a D-alpha-amino acid + H(+). An aminoacyl-tRNA editing enzyme that deacylates mischarged D-aminoacyl-tRNAs. Also deacylates mischarged glycyl-tRNA(Ala), protecting cells against glycine mischarging by AlaRS. Acts via tRNA-based rather than protein-based catalysis; rejects L-amino acids rather than detecting D-amino acids in the active site. By recycling D-aminoacyl-tRNA to D-amino acids and free tRNA molecules, this enzyme counteracts the toxicity associated with the formation of D-aminoacyl-tRNA entities in vivo and helps enforce protein L-homochirality. This is D-aminoacyl-tRNA deacylase from Cupriavidus taiwanensis (strain DSM 17343 / BCRC 17206 / CCUG 44338 / CIP 107171 / LMG 19424 / R1) (Ralstonia taiwanensis (strain LMG 19424)).